The primary structure comprises 360 residues: DNA replication and repair protein RecF (360 aa).

30–37 (GQNGSGKT) is an ATP binding site.

This sequence belongs to the RecF family.

It is found in the cytoplasm. The RecF protein is involved in DNA metabolism; it is required for DNA replication and normal SOS inducibility. RecF binds preferentially to single-stranded, linear DNA. It also seems to bind ATP. The chain is DNA replication and repair protein RecF from Shewanella putrefaciens (strain CN-32 / ATCC BAA-453).